The following is a 160-amino-acid chain: 6-hydroxypseudooxynicotine dehydrogenase complex subunit beta (160 aa).

In terms of domain architecture, 2Fe-2S ferredoxin-type spans 4–80; the sequence is FRLTVEVNGV…NSRIETVESL (77 aa). Positions 42, 47, 50, 62, 101, 104, 137, and 139 each coordinate [2Fe-2S] cluster.

Heterohexamer of 2 alpha (kdhA), 2 beta (kdhB) and 2 gamma (kdhC) subunit. Dimer of heterotrimers. [2Fe-2S] cluster is required as a cofactor.

The enzyme catalyses 6-hydroxypseudooxynicotine + A + H2O = 2,6-dihydroxypseudooxynicotine + AH2. It functions in the pathway alkaloid degradation; nicotine degradation. Its function is as follows. Molybdo-flavoprotein enzyme complex involved in nicotine degradation. The subunit gamma (large subunit) contains the substrate-binding sites, the subunit alpha (medium subunit) binds FAD and the subunit beta (small subunit) has a 2Fe-2S ferredoxin-type domain which binds 2 2Fe-2S clusters. In Paenarthrobacter nicotinovorans (Arthrobacter nicotinovorans), this protein is 6-hydroxypseudooxynicotine dehydrogenase complex subunit beta (kdhB).